The chain runs to 265 residues: Putative cysteine-rich receptor-like protein kinase 9 (265 aa).

Residues 1–23 (MSSLISFIFLFLFSFLTSFKASA) form the signal peptide. Gnk2-homologous domains follow at residues 27–131 (FYLN…DKNI) and 142–244 (FILS…LYSF). N-linked (GlcNAc...) asparagine glycans are attached at residues Asn-35, Asn-60, Asn-69, Asn-153, Asn-177, and Asn-246.

It belongs to the protein kinase superfamily. Ser/Thr protein kinase family. CRK subfamily.

The protein resides in the secreted. In Arabidopsis thaliana (Mouse-ear cress), this protein is Putative cysteine-rich receptor-like protein kinase 9 (CRK9).